The sequence spans 131 residues: NADH dehydrogenase [ubiquinone] 1 alpha subcomplex subunit 6 (131 aa).

It belongs to the complex I LYR family. In terms of assembly, mammalian complex I is composed of 45 different subunits.

It localises to the mitochondrion inner membrane. In terms of biological role, accessory subunit of the mitochondrial membrane respiratory chain NADH dehydrogenase (Complex I), that is believed to be not involved in catalysis. Required for proper complex I assembly. Complex I functions in the transfer of electrons from NADH to the respiratory chain. The immediate electron acceptor for the enzyme is believed to be ubiquinone. The protein is NADH dehydrogenase [ubiquinone] 1 alpha subcomplex subunit 6 of Mus musculus (Mouse).